The following is a 47-amino-acid chain: Large ribosomal subunit protein bL34 (47 aa).

This sequence belongs to the bacterial ribosomal protein bL34 family.

This is Large ribosomal subunit protein bL34 from Nocardia farcinica (strain IFM 10152).